The sequence spans 884 residues: MISRNRRRNNQQKNIEKEKQLETIINKEVKENKDSMKEDKLVVTEESNGDVTTAKEQSNNINLQKNDLVKEVMNIQNQTLNTVVTENKVEIEEIVKKYIPSYNTDSLIVKKLTEIQESSAKTYNTLFRLFTPVKSYLYDINGEKKLSTRWYWKLLKDDLPAGDYSVRQFFLSLYLNVLEEMPDYIMLRDMAVDNPYSAEAGKIVDGKSKEILIELYQDQMTEGYIRRYMSELRHKISGETNTAKYPAILHPVDNELNQYFLEHQLIQPLTTRNIAELIPTQLYHDPNYVFNIDAAFLTNSRFVPPYLTQDRIGLHDGFESIWDSKTHADYVSARRFIPDLTELVDAEKQIKEMAAHLQLEAITVQVESQFLAGISAAAANEAFKFIIGSVLSTRTIAVEFITSNYMSLASCMYLMTIMPSEIFLRESLVAMQLAIINTLIYPALGLAQMHYQAGEVRTPFELAEMQVANRSIRQWLHHCNTLQFGRQITEGIIHLRFTNDIMTGRIVNLFSTMLVALSSQPFATYPLDYKRSVQRALQLLSNRTAQIADLTRLIVYNYTTLSACIVMNMHLVGTLTVERIQATSLTSLMMLISNKTVIPEPSSLFSYFSSNINFLTNYNEQIDNVVAEIMAAYRLNLYQQKMLMLVTRFVSKLYIFDAPKIPPDQMYRLRNRLRNIPVERRRADVFRIIMNNRDLIEKTSERICQGVLLSYTPMPLTYVEDVGLTNVINDTNSFQIINIEEIEKTGDYSAITNALLRDTPIILKGAIPYVTNSSVIDVLSKVDTTVFASIVKDRDISKLKPIKFIINSDSSEYYLVHNNKWTPTTTTAVYKARSQQFDIQHSVSMLESNLFFVVYNDLFKYIKTTTVLPINAVSYDGARIMQET.

It belongs to the rotavirus VP2 family. As to quaternary structure, homodecamer; each decamer is made up of two conformers of VP2, called VP2A and VP2B. Interacts with a VP1-VP3 complex. Interacts with the intermediate capsid protein VP6. Interacts with NSP5. Interacts (via N-terminus) with NSP2.

It is found in the virion. Inner capsid protein that self-assembles to form an icosahedral capsid with a T=2 symmetry, which consists of 120 copies of VP2, with channels at each of its five-fold vertices. This capsid constitutes the innermost concentric layer of the viral mature particle. It encapsidates the polymerase VP1, the capping enzyme VP3 and the genomic dsRNA, thereby defining the core. The innermost VP2 capsid and the intermediate VP6 capsid remain intact following cell entry to protect the dsRNA from degradation and to prevent unfavorable antiviral responses in the host cell during all the replication cycle of the virus. Nascent transcripts are transcribed within the structural confines of this double-layered particle (DLP) and are extruded through the channels formed by VP2 N-termini. VP2 is required for the replicase activity of VP1 polymerase. Probably recruits a copy of a VP1-VP3 complex, potentially along with a segment of plus-strand RNA, as a decamer of VP2 assembles. May activate the autoinhibited VP1/RNA complex to coordinate packaging and genome replication. This chain is Inner capsid protein VP2, found in Homo sapiens (Human).